The primary structure comprises 124 residues: UPF0212 protein Hlac_0869 (124 aa).

This sequence belongs to the UPF0212 family.

This is UPF0212 protein Hlac_0869 from Halorubrum lacusprofundi (strain ATCC 49239 / DSM 5036 / JCM 8891 / ACAM 34).